The primary structure comprises 273 residues: Hydroxyethylthiazole kinase (273 aa).

Methionine 41 lines the substrate pocket. Arginine 117 and threonine 170 together coordinate ATP. Glycine 197 contributes to the substrate binding site.

Belongs to the Thz kinase family. Mg(2+) serves as cofactor.

The enzyme catalyses 5-(2-hydroxyethyl)-4-methylthiazole + ATP = 4-methyl-5-(2-phosphooxyethyl)-thiazole + ADP + H(+). It participates in cofactor biosynthesis; thiamine diphosphate biosynthesis; 4-methyl-5-(2-phosphoethyl)-thiazole from 5-(2-hydroxyethyl)-4-methylthiazole: step 1/1. Functionally, catalyzes the phosphorylation of the hydroxyl group of 4-methyl-5-beta-hydroxyethylthiazole (THZ). The polypeptide is Hydroxyethylthiazole kinase (Clostridium acetobutylicum (strain ATCC 824 / DSM 792 / JCM 1419 / IAM 19013 / LMG 5710 / NBRC 13948 / NRRL B-527 / VKM B-1787 / 2291 / W)).